Reading from the N-terminus, the 437-residue chain is ATP-dependent protease ATPase subunit HslU (437 aa).

ATP-binding positions include Ile-18, 60–65 (GVGKTE), Asp-250, Glu-315, and Arg-387.

It belongs to the ClpX chaperone family. HslU subfamily. As to quaternary structure, a double ring-shaped homohexamer of HslV is capped on each side by a ring-shaped HslU homohexamer. The assembly of the HslU/HslV complex is dependent on binding of ATP.

The protein localises to the cytoplasm. ATPase subunit of a proteasome-like degradation complex; this subunit has chaperone activity. The binding of ATP and its subsequent hydrolysis by HslU are essential for unfolding of protein substrates subsequently hydrolyzed by HslV. HslU recognizes the N-terminal part of its protein substrates and unfolds these before they are guided to HslV for hydrolysis. The sequence is that of ATP-dependent protease ATPase subunit HslU from Dinoroseobacter shibae (strain DSM 16493 / NCIMB 14021 / DFL 12).